The chain runs to 232 residues: UPF0177 protein in abiGi 5'region (232 aa).

The next 6 membrane-spanning stretches (helical) occupy residues 12–32, 47–67, 86–106, 124–144, 165–185, and 206–226; these read YLSL…ILAY, VVAT…GILI, LLFL…SYTY, SIQI…APIF, IVSC…LIVY, and ILVH…LQVI.

The protein belongs to the UPF0177 family.

The protein resides in the cell membrane. In terms of biological role, the function of this protein is currently unknown, but it has been shown that it is not necessary for phage resistance. This is UPF0177 protein in abiGi 5'region from Lactococcus lactis subsp. cremoris (Streptococcus cremoris).